We begin with the raw amino-acid sequence, 686 residues long: ATP-dependent DNA helicase RecG (686 aa).

Positions 50–149 (TVIDLNQAED…GTQTQENADV (100 aa)) are wedge domain. A Helicase ATP-binding domain is found at 279–439 (DLKAPIRMHR…VFGEMDVSSI (161 aa)). Residue 292–299 (GDVGSGKT) participates in ATP binding. Positions 392–395 (DEQH) match the DEAH box motif. Residues 462-618 (VLMQMTSELK…GFELSERDLE (157 aa)) form the Helicase C-terminal domain.

This sequence belongs to the helicase family. RecG subfamily. Monomer.

It carries out the reaction Couples ATP hydrolysis with the unwinding of duplex DNA by translocating in the 3'-5' direction.. The enzyme catalyses ATP + H2O = ADP + phosphate + H(+). Plays a critical role in recombination and DNA repair. Helps process Holliday junction intermediates to mature products by catalyzing branch migration. Has replication fork regression activity, unwinds stalled or blocked replication forks to make a HJ that can be resolved. Has a DNA unwinding activity characteristic of a DNA helicase with 3'-5' polarity. The chain is ATP-dependent DNA helicase RecG from Staphylococcus aureus (strain NCTC 8325 / PS 47).